A 425-amino-acid chain; its full sequence is UBX domain-containing protein 4 (425 aa).

The tract at residues 224 to 257 (TPIPSLPSTPSSYQNLPSQSLTGESLPTVSNQEK) is disordered. Residues 236–254 (YQNLPSQSLTGESLPTVSN) show a composition bias toward polar residues. A Phosphoserine modification is found at Ser338. The UBX domain maps to 341 to 390 (PLPSSAIVKFDFGNGKSIVHEFSKDDNIETLRAFVASHLSPEESTSFQLT).

It is found in the cytoplasm. Its subcellular location is the nucleus. In terms of biological role, involved in CDC48-dependent protein degradation through the ubiquitin/proteasome pathway. This is UBX domain-containing protein 4 (ubx4) from Schizosaccharomyces pombe (strain 972 / ATCC 24843) (Fission yeast).